The sequence spans 263 residues: 4-hydroxy-tetrahydrodipicolinate reductase (263 aa).

Residues 8 to 13 (GACGRM), Asp34, 99 to 101 (GTT), and 125 to 128 (SPNY) each bind NAD(+). The active-site Proton donor/acceptor is the His157. (S)-2,3,4,5-tetrahydrodipicolinate is bound at residue His158. The active-site Proton donor is the Lys161. 167-168 (GT) is a binding site for (S)-2,3,4,5-tetrahydrodipicolinate.

Belongs to the DapB family.

Its subcellular location is the cytoplasm. The enzyme catalyses (S)-2,3,4,5-tetrahydrodipicolinate + NAD(+) + H2O = (2S,4S)-4-hydroxy-2,3,4,5-tetrahydrodipicolinate + NADH + H(+). It carries out the reaction (S)-2,3,4,5-tetrahydrodipicolinate + NADP(+) + H2O = (2S,4S)-4-hydroxy-2,3,4,5-tetrahydrodipicolinate + NADPH + H(+). It participates in amino-acid biosynthesis; L-lysine biosynthesis via DAP pathway; (S)-tetrahydrodipicolinate from L-aspartate: step 4/4. In terms of biological role, catalyzes the conversion of 4-hydroxy-tetrahydrodipicolinate (HTPA) to tetrahydrodipicolinate. The protein is 4-hydroxy-tetrahydrodipicolinate reductase of Methanosarcina barkeri (strain Fusaro / DSM 804).